A 137-amino-acid chain; its full sequence is Cellular retinoic acid-binding protein 1 (137 aa).

A Nuclear localization signal motif is present at residues 21–31 (KALGVNTMLRK). Position 132–134 (132–134 (RIY)) interacts with all-trans-retinoate.

Belongs to the calycin superfamily. Fatty-acid binding protein (FABP) family.

Its subcellular location is the cytoplasm. Functionally, cytosolic CRABPs may regulate the access of retinoic acid to the nuclear retinoic acid receptors. This chain is Cellular retinoic acid-binding protein 1 (crabp1), found in Takifugu rubripes (Japanese pufferfish).